The chain runs to 476 residues: Methylenetetrahydrofolate--tRNA-(uracil-5-)-methyltransferase TrmFO (476 aa).

14 to 19 (GGGLAG) contributes to the FAD binding site. The disordered stretch occupies residues 428 to 447 (LTEPPTHGADGKKLRGPEKS). The span at 436-447 (ADGKKLRGPEKS) shows a compositional bias: basic and acidic residues.

This sequence belongs to the MnmG family. TrmFO subfamily. It depends on FAD as a cofactor.

The protein resides in the cytoplasm. It catalyses the reaction uridine(54) in tRNA + (6R)-5,10-methylene-5,6,7,8-tetrahydrofolate + NADH + H(+) = 5-methyluridine(54) in tRNA + (6S)-5,6,7,8-tetrahydrofolate + NAD(+). The enzyme catalyses uridine(54) in tRNA + (6R)-5,10-methylene-5,6,7,8-tetrahydrofolate + NADPH + H(+) = 5-methyluridine(54) in tRNA + (6S)-5,6,7,8-tetrahydrofolate + NADP(+). In terms of biological role, catalyzes the folate-dependent formation of 5-methyl-uridine at position 54 (M-5-U54) in all tRNAs. The sequence is that of Methylenetetrahydrofolate--tRNA-(uracil-5-)-methyltransferase TrmFO from Rhodopseudomonas palustris (strain BisA53).